The primary structure comprises 170 residues: Regulator of ribonuclease activity A (170 aa).

Belongs to the RraA family. As to quaternary structure, homotrimer. Binds to both RNA-binding sites in the C-terminal region of Rne and to RhlB.

It is found in the cytoplasm. Its function is as follows. Globally modulates RNA abundance by binding to RNase E (Rne) and regulating its endonucleolytic activity. Can modulate Rne action in a substrate-dependent manner by altering the composition of the degradosome. Modulates RNA-binding and helicase activities of the degradosome. The protein is Regulator of ribonuclease activity A of Psychromonas ingrahamii (strain DSM 17664 / CCUG 51855 / 37).